A 380-amino-acid chain; its full sequence is 3-dehydroquinate synthase (380 aa).

Belongs to the archaeal-type DHQ synthase family.

It catalyses the reaction 2-amino-2,3,7-trideoxy-D-lyxo-hept-6-ulosonate + NAD(+) + H2O = 3-dehydroquinate + NH4(+) + NADH + H(+). In terms of biological role, catalyzes the oxidative deamination and cyclization of 2-amino-3,7-dideoxy-D-threo-hept-6-ulosonic acid (ADH) to yield 3-dehydroquinate (DHQ), which is fed into the canonical shikimic pathway of aromatic amino acid biosynthesis. This is 3-dehydroquinate synthase from Methanosarcina acetivorans (strain ATCC 35395 / DSM 2834 / JCM 12185 / C2A).